A 151-amino-acid chain; its full sequence is Globin CTT-IIIA (151 aa).

Residues Ser8–Asp147 enclose the Globin domain. His98 contacts heme b.

The protein belongs to the globin family. Monomer.

In Chironomus thummi thummi (Midge), this protein is Globin CTT-IIIA.